The primary structure comprises 46 residues: Mu-segestritoxin-Sf1c (46 aa).

4 disulfides stabilise this stretch: cysteine 3–cysteine 19, cysteine 10–cysteine 22, cysteine 18–cysteine 42, and cysteine 24–cysteine 40. Residues 31-33 (RPW) are keys region for toxin activity.

Belongs to the neurotoxin 16 (SFI) family. Expressed by the venom gland.

The protein resides in the secreted. Functionally, insecticidal toxin. It inhibits insect voltage-gated sodium channels (Nav) by partially blocking the channel pore in DUM neurons from the American cockroach, not by acting as a gating modifier. The inhibition is only partially reversible after prolonged washout. In vivo, the toxin causes flaccid paralysis followed by death when injected into Heliothis virescens larvae. It also causes uncoordinated movements followed by full paralysis to sheep blowflies (Lucilia cuprina). When the toxin is fused to snowdrop lectin, it is orally active against larvae of the tomato moth (Laconobia oleracea), the rice brown planthopper (Nilaparvata lugens), and the peach-potato aphid (Myzus persicae). This chain is Mu-segestritoxin-Sf1c, found in Segestria florentina (Tube-web spider).